We begin with the raw amino-acid sequence, 297 residues long: Heme A synthase (297 aa).

Residues 1 to 6 (MHKRLK) are Cytoplasmic-facing. The helical transmembrane segment at 7–27 (IYSVITSIGVLIVLLQGALVT) threads the bilayer. The Extracellular portion of the chain corresponds to 28-62 (KTGSGEGCGATWPLCFGEVIPTNPAIETIIEYSHR). A disulfide bridge links cysteine 35 with cysteine 42. Glutamate 58 is a catalytic residue. Heme o is bound at residue histidine 61. The helical transmembrane segment at 63 to 83 (IVSGLVGAMIIILAIWAWKQL) threads the bilayer. At 84–93 (KHMREAKALS) the chain is on the cytoplasmic side. The helical transmembrane segment at 94-114 (FAAVILIIFQGLLGAGAVVFG) threads the bilayer. Over 115 to 118 (QSKA) the chain is Extracellular. A helical membrane pass occupies residues 119–139 (ILALHFGISAMSLAAVVLLTI). Heme o is bound at residue histidine 123. Topologically, residues 140–156 (LAFEDGREHTMAPKVSR) are cytoplasmic. The chain crosses the membrane as a helical span at residues 157-177 (GFKYYVFFVITYCYAVIYSGA). At 178–210 (YVKHSEATLACAGFPLCNGQIFPGLYGPVGAHY) the chain is on the extracellular side. Residues cysteine 188 and cysteine 194 are joined by a disulfide bond. A helical transmembrane segment spans residues 211 to 231 (FHRVVGTILLLFLLILMIWTL). Histidine 212 is a binding site for heme b. At 232 to 242 (SRYRHYRVLTW) the chain is on the cytoplasmic side. A helical membrane pass occupies residues 243-263 (TAVLSFLLVVGQFISGISIVF). At 264–271 (TQNALSVG) the chain is on the extracellular side. The helical transmembrane segment at 272–292 (LIHALIISILFSALSYMTMII) threads the bilayer. Residue histidine 274 participates in heme b binding. Topologically, residues 293 to 297 (TRPSH) are cytoplasmic.

Belongs to the COX15/CtaA family. Type 1 subfamily. Interacts with CtaB. Heme b is required as a cofactor.

The protein resides in the cell membrane. The enzyme catalyses Fe(II)-heme o + 2 A + H2O = Fe(II)-heme a + 2 AH2. The protein operates within porphyrin-containing compound metabolism; heme A biosynthesis; heme A from heme O: step 1/1. Its function is as follows. Catalyzes the conversion of heme O to heme A by two successive hydroxylations of the methyl group at C8. The first hydroxylation forms heme I, the second hydroxylation results in an unstable dihydroxymethyl group, which spontaneously dehydrates, resulting in the formyl group of heme A. The sequence is that of Heme A synthase from Alkalihalophilus pseudofirmus (strain ATCC BAA-2126 / JCM 17055 / OF4) (Bacillus pseudofirmus).